A 121-amino-acid polypeptide reads, in one-letter code: UPF0145 protein SGR_4080 (121 aa).

The protein belongs to the UPF0145 family.

This is UPF0145 protein SGR_4080 from Streptomyces griseus subsp. griseus (strain JCM 4626 / CBS 651.72 / NBRC 13350 / KCC S-0626 / ISP 5235).